The chain runs to 315 residues: Olfactory receptor 3A2 (315 aa).

Residues 1–29 are Extracellular-facing; the sequence is MEPEAGTNRTAVAEFILLGLVQTEEMQPV. An N-linked (GlcNAc...) asparagine glycan is attached at Asn8. Residues 30-52 traverse the membrane as a helical segment; that stretch reads VFVLFLFAYLVTIGGNLSILAAI. The Cytoplasmic portion of the chain corresponds to 53 to 60; the sequence is LVEPKLHA. A helical membrane pass occupies residues 61–82; sequence PMYFFLGNLSVLDVGCITVTVP. At 83-103 the chain is on the extracellular side; that stretch reads AMLGRLLSHKSTISYDACLSQ. A disulfide bridge links Cys100 with Cys192. A helical transmembrane segment spans residues 104 to 123; sequence LFFFHLLAGMDCFLLTAMAY. Residues 124 to 143 are Cytoplasmic-facing; sequence DRFLAICWPLTYSTRMSQTV. Residues 144–161 traverse the membrane as a helical segment; the sequence is QRMLVAASWACAFTNALT. Topologically, residues 162 to 199 are extracellular; that stretch reads HTVAMSTLNFCGPNEVNHFYCDLPQLFQLSCSSTQLNE. The helical transmembrane segment at 200-223 threads the bilayer; that stretch reads LLLFAVGFIMAGTPLVLIITSYSH. Over 224–240 the chain is Cytoplasmic; the sequence is VAAAVLRIRSVEGWKKA. A helical membrane pass occupies residues 241 to 264; that stretch reads FSTCGSHLTVVCLFFGTGIFNYMR. Residues 265 to 275 lie on the Extracellular side of the membrane; sequence LGSEEASDKDK. A helical membrane pass occupies residues 276–295; it reads GVGVFNTVINPMLNPLIYSL. The Cytoplasmic portion of the chain corresponds to 296 to 315; the sequence is RNPDVQGALWRIFLGRRSLT.

It belongs to the G-protein coupled receptor 1 family.

The protein localises to the cell membrane. Its function is as follows. Odorant receptor. The protein is Olfactory receptor 3A2 (OR3A2) of Pan troglodytes (Chimpanzee).